Here is a 422-residue protein sequence, read N- to C-terminus: Lipase member M (422 aa).

An N-terminal signal peptide occupies residues 1-33; it reads MSEILSRVWTVSHRVEIWLLILVAYLLQRNVNS. N-linked (GlcNAc...) asparagine glycosylation occurs at N48. The 301-residue stretch at 92-392 folds into the AB hydrolase-1 domain; it reads PVVLLQHGLL…EWAHVDFIWG (301 aa). S186 serves as the catalytic Nucleophile. C260 and C269 are oxidised to a cystine. Catalysis depends on charge relay system residues D357 and H386.

This sequence belongs to the AB hydrolase superfamily. Lipase family.

Its subcellular location is the secreted. Its function is as follows. Plays a highly specific role in the last step of keratinocyte differentiation. May have an essential function in lipid metabolism of the most differentiated epidermal layers. This is Lipase member M (Lipm) from Mus musculus (Mouse).